Reading from the N-terminus, the 487-residue chain is Probable UDP-N-acetylglucosamine pyrophosphorylase (487 aa).

A Substrate binding motif is present at residues 105–108; sequence LAGG. UTP-binding positions include 105–108, Lys119, Gln198, and Gly225; that span reads LAGG. Asn226 provides a ligand contact to substrate. Asp256 lines the UTP pocket. Positions 307–308 match the Substrate binding motif; the sequence is EY. Lys382 contacts UTP. A substrate-binding site is contributed by Lys412.

It belongs to the UDPGP type 1 family.

The protein resides in the cytoplasm. The enzyme catalyses N-acetyl-alpha-D-glucosamine 1-phosphate + UTP + H(+) = UDP-N-acetyl-alpha-D-glucosamine + diphosphate. It functions in the pathway nucleotide-sugar biosynthesis; UDP-N-acetyl-alpha-D-glucosamine biosynthesis; UDP-N-acetyl-alpha-D-glucosamine from N-acetyl-alpha-D-glucosamine 1-phosphate: step 1/1. In Dictyostelium discoideum (Social amoeba), this protein is Probable UDP-N-acetylglucosamine pyrophosphorylase (uap1).